We begin with the raw amino-acid sequence, 353 residues long: Vomeronasal type-1 receptor 1 (353 aa).

At 1 to 56 (MVGDTLKLLSPLMTRYFFLLFYSTDSSDLNENQHPLDFDEMAFGKVKSGISFLIQT) the chain is on the extracellular side. Residues 57-77 (GVGILGNSFLLCFYNLILFTG) traverse the membrane as a helical segment. The Cytoplasmic portion of the chain corresponds to 78-84 (HKLRPTD). A helical membrane pass occupies residues 85–105 (LILSHLALANSMVLFFKGIPQ). Residues 106–132 (TMAAFGLKYLLNDTGCKFVFYYHRVGT) are Extracellular-facing. A glycan (N-linked (GlcNAc...) asparagine) is linked at Asn117. The chain crosses the membrane as a helical span at residues 133 to 153 (RVSLSTICLLNGFQAIKLNPS). At 154–169 (ICRWMEIKIRSPRFID) the chain is on the cytoplasmic side. Residues 170 to 190 (FCCLLCWVPHVLMNASVLLLV) form a helical membrane-spanning segment. The Extracellular segment spans residues 191–226 (NGPLNSKNSSAKNNYGYCSYKASKRFSSLHAVLYFS). The N-linked (GlcNAc...) asparagine glycan is linked to Asn198. Residues 227-247 (PDFMSLGFMVWASGSMVFFLY) form a helical membrane-spanning segment. Residues 248–274 (RHKQQVQHNHSNRLSCRPSQETRATRT) lie on the Cytoplasmic side of the membrane. The helical transmembrane segment at 275 to 295 (IMVLVSSFFVFYSVHSFLTIW) threads the bilayer. Over 296–303 (TTVVANPG) the chain is Extracellular. The helical transmembrane segment at 304-324 (QWIVNNSVLVASYFPSRSPFV) threads the bilayer. Topologically, residues 325–353 (LIMSDTRISQFCFACRTRKTLFPNLVVMP) are cytoplasmic.

Belongs to the G-protein coupled receptor 1 family.

The protein localises to the cell membrane. In terms of biological role, putative pheromone receptor. In Gorilla gorilla gorilla (Western lowland gorilla), this protein is Vomeronasal type-1 receptor 1 (VN1R1).